An 839-amino-acid chain; its full sequence is Probable beta-glucosidase I (839 aa).

N-linked (GlcNAc...) asparagine glycosylation is present at N197. D225 is a catalytic residue. The PA14 domain maps to 395 to 555 (DGKKGFSFRV…SQEELIAKAA (161 aa)).

This sequence belongs to the glycosyl hydrolase 3 family.

It localises to the secreted. The catalysed reaction is Hydrolysis of terminal, non-reducing beta-D-glucosyl residues with release of beta-D-glucose.. The protein operates within glycan metabolism; cellulose degradation. Functionally, beta-glucosidases are one of a number of cellulolytic enzymes involved in the degradation of cellulosic biomass. Catalyzes the last step releasing glucose from the inhibitory cellobiose. This Aspergillus terreus (strain NIH 2624 / FGSC A1156) protein is Probable beta-glucosidase I (bglI).